Reading from the N-terminus, the 346-residue chain is Ribulose-5-phosphate reductase (346 aa).

Zn(2+) is bound by residues Cys-45, His-71, Glu-72, and Glu-151.

The protein belongs to the zinc-containing alcohol dehydrogenase family. The cofactor is Zn(2+).

The catalysed reaction is D-ribitol 5-phosphate + NADP(+) = D-ribulose 5-phosphate + NADPH + H(+). Its pathway is cell wall biogenesis; poly(ribitol phosphate) teichoic acid biosynthesis. In terms of biological role, catalyzes the NADPH dependent reduction of D-ribulose 5-phosphate to D-ribitol 5-phosphate. The sequence is that of Ribulose-5-phosphate reductase from Streptococcus pneumoniae (strain ATCC BAA-255 / R6).